Here is a 256-residue protein sequence, read N- to C-terminus: Probable hydroxyacylglutathione hydrolase glo2 (256 aa).

Positions 63, 65, 67, 68, 118, and 139 each coordinate Zn(2+). Residues arginine 148, 178-180 (HEY), and 250-253 (RDMK) each bind substrate. Histidine 178 is a Zn(2+) binding site.

This sequence belongs to the metallo-beta-lactamase superfamily. Glyoxalase II family. Zn(2+) is required as a cofactor.

Its subcellular location is the cytoplasm. The protein localises to the nucleus. It carries out the reaction an S-(2-hydroxyacyl)glutathione + H2O = a 2-hydroxy carboxylate + glutathione + H(+). The enzyme catalyses (R)-S-lactoylglutathione + H2O = (R)-lactate + glutathione + H(+). It participates in secondary metabolite metabolism; methylglyoxal degradation; (R)-lactate from methylglyoxal: step 2/2. Its function is as follows. Thiolesterase that catalyzes the hydrolysis of S-D-lactoylglutathione to form glutathione and D-lactic acid. Involved in the metabolism of methylglyoxal, a toxic compound for yeast proliferation, by converting methylglyoxal to lactate via S-D-lactoylglutathione by sequential enzyme reactions catalyzed by glyoxalase I and glyoxalase II. The chain is Probable hydroxyacylglutathione hydrolase glo2 (glo2) from Schizosaccharomyces pombe (strain 972 / ATCC 24843) (Fission yeast).